Consider the following 214-residue polypeptide: tRNA (guanine-N(7)-)-methyltransferase (214 aa).

S-adenosyl-L-methionine-binding residues include glutamate 44, glutamate 69, aspartate 96, and aspartate 118. Aspartate 118 is a catalytic residue. Substrate-binding positions include lysine 122, aspartate 154, and threonine 191 to glutamate 194.

This sequence belongs to the class I-like SAM-binding methyltransferase superfamily. TrmB family.

The enzyme catalyses guanosine(46) in tRNA + S-adenosyl-L-methionine = N(7)-methylguanosine(46) in tRNA + S-adenosyl-L-homocysteine. The protein operates within tRNA modification; N(7)-methylguanine-tRNA biosynthesis. In terms of biological role, catalyzes the formation of N(7)-methylguanine at position 46 (m7G46) in tRNA. This is tRNA (guanine-N(7)-)-methyltransferase from Listeria welshimeri serovar 6b (strain ATCC 35897 / DSM 20650 / CCUG 15529 / CIP 8149 / NCTC 11857 / SLCC 5334 / V8).